Consider the following 142-residue polypeptide: Multiprotein-bridging factor 1a (142 aa).

Residues 51–64 (GTNKAASSGTSLNT) show a composition bias toward polar residues. Residues 51–77 (GTNKAASSGTSLNTKMLDDDTENLTHE) form a disordered region. The HTH cro/C1-type domain occupies 87–141 (IMQARTDKKLTQSQLAQIINEKPQVIQEYESGKAIPNQQILSKLERALGAKLRGK). Positions 98–117 (QSQLAQIINEKPQVIQEYES) form a DNA-binding region, H-T-H motif.

It belongs to the MBF1 family. As to expression, expressed in leaves, roots, stems, flowers, siliques and shoots. Detected only in anthers and some seeds in siliques.

It is found in the nucleus. The protein localises to the nucleolus. Functionally, transcriptional coactivator that stimulates transcriptional activity by bridging regulatory proteins and TBP, thereby recruiting TBP to promoters occupied by DNA-binding regulators. This is Multiprotein-bridging factor 1a (MBF1A) from Arabidopsis thaliana (Mouse-ear cress).